The following is a 176-amino-acid chain: Large ribosomal subunit protein eL6 (176 aa).

Residues 1–27 (MSQVAPKWYQSEDVPAPKQTRKTARPQ) are disordered.

It belongs to the eukaryotic ribosomal protein eL6 family. As to quaternary structure, component of the large ribosomal subunit. Mature ribosomes consist of a small (40S) and a large (60S) subunit. The 40S subunit contains about 32 different proteins and 1 molecule of RNA (18S). The 60S subunit contains 45 different proteins and 3 molecules of RNA (25S, 5.8S and 5S).

Its subcellular location is the cytoplasm. In terms of biological role, component of the ribosome, a large ribonucleoprotein complex responsible for the synthesis of proteins in the cell. The small ribosomal subunit (SSU) binds messenger RNAs (mRNAs) and translates the encoded message by selecting cognate aminoacyl-transfer RNA (tRNA) molecules. The large subunit (LSU) contains the ribosomal catalytic site termed the peptidyl transferase center (PTC), which catalyzes the formation of peptide bonds, thereby polymerizing the amino acids delivered by tRNAs into a polypeptide chain. The nascent polypeptides leave the ribosome through a tunnel in the LSU and interact with protein factors that function in enzymatic processing, targeting, and the membrane insertion of nascent chains at the exit of the ribosomal tunnel. This Candida albicans (strain SC5314 / ATCC MYA-2876) (Yeast) protein is Large ribosomal subunit protein eL6.